An 81-amino-acid chain; its full sequence is Protein Vpu (81 aa).

The Extracellular segment spans residues 1–7 (MQPSQII). Residues 8–28 (AIAALVVAAIIAIVVWTIVFI) form a helical membrane-spanning segment. Residues 29 to 81 (EYRRIKRQRKIDCIIDRIRERAEDSGNESEGDREELSKLVEMGHHAPWDIDDL) are Cytoplasmic-facing. A phosphoserine; by host CK2 mark is found at serine 53 and serine 57.

The protein belongs to the HIV-1 VPU protein family. As to quaternary structure, homopentamer. Interacts with host CD4 and BRTC; these interactions induce proteasomal degradation of CD4. Interacts with host BST2; this interaction leads to the degradation of host BST2. Interacts with host FBXW11. Interacts with host AP1M1; this interaction plays a role in the mistrafficking and subsequent degradation of host BST2. Interacts with host RANBP2; this interaction allows Vpu to down-regulate host BLM sumoylation. Phosphorylated by host CK2. This phosphorylation is necessary for interaction with human BTRC and degradation of CD4.

The protein localises to the host membrane. With respect to regulation, ion channel activity is inhibited by hexamethylene amiloride in vitro. Functionally, enhances virion budding by targeting host CD4 and Tetherin/BST2 to proteasome degradation. Degradation of CD4 prevents any unwanted premature interactions between viral Env and its host receptor CD4 in the endoplasmic reticulum. Degradation of antiretroviral protein Tetherin/BST2 is important for virion budding, as BST2 tethers new viral particles to the host cell membrane. Mechanistically, Vpu bridges either CD4 or BST2 to BTRC, a substrate recognition subunit of the Skp1/Cullin/F-box protein E3 ubiquitin ligase, induces their ubiquitination and subsequent proteasomal degradation. The alteration of the E3 ligase specificity by Vpu seems to promote the degradation of host IKBKB, leading to NF-kappa-B down-regulation and subsequent apoptosis. Acts as a viroporin that forms an oligomeric ion channel in membranes. Modulates the host DNA repair mechanisms to promote degradation of nuclear viral cDNA in cells that are already productively infected in order to suppress immune sensing and proviral hyper-integration (superinfection). Manipulates PML-NBs and modulates SUMOylation of host BLM protein thereby enhancing its DNA-end processing activity toward viral unintegrated linear DNA. Also inhibits RAD52-mediated homologous repair of viral cDNA, preventing the generation of dead-end circular forms of single copies of the long terminal repeat and permitting sustained nucleolytic attack. In Homo sapiens (Human), this protein is Protein Vpu.